Reading from the N-terminus, the 213-residue chain is MGSNYIVIEGLEGAGKTTARDVVVETLEQLGIRNMIFTREPGGTQLAEKLRSLVLDIRSVGDEVITDKAEVLMFYAARVQLVETVIKPALAQGVWVIGDRHDLSTQAYQGGGRGIDQTMLATLRDAVLGDFRPDLTLYLDVTPEVGLKRARARGDLDRIEQESFDFFNRTRARYLELAAQDSRIRTIDATQPLDAVMRDIRATVTKWVQEQAA.

ATP is bound at residue 10-17 (GLEGAGKT).

This sequence belongs to the thymidylate kinase family.

It catalyses the reaction dTMP + ATP = dTDP + ADP. Phosphorylation of dTMP to form dTDP in both de novo and salvage pathways of dTTP synthesis. This chain is Thymidylate kinase, found in Salmonella dublin (strain CT_02021853).